We begin with the raw amino-acid sequence, 1375 residues long: DNA-directed RNA polymerase subunit beta (1375 aa).

It belongs to the RNA polymerase beta chain family. As to quaternary structure, the RNAP catalytic core consists of 2 alpha, 1 beta, 1 beta' and 1 omega subunit. When a sigma factor is associated with the core the holoenzyme is formed, which can initiate transcription.

The catalysed reaction is RNA(n) + a ribonucleoside 5'-triphosphate = RNA(n+1) + diphosphate. Its function is as follows. DNA-dependent RNA polymerase catalyzes the transcription of DNA into RNA using the four ribonucleoside triphosphates as substrates. The polypeptide is DNA-directed RNA polymerase subunit beta (Methylorubrum populi (strain ATCC BAA-705 / NCIMB 13946 / BJ001) (Methylobacterium populi)).